Here is a 141-residue protein sequence, read N- to C-terminus: Hemoglobin subunit alpha-2 (141 aa).

In terms of domain architecture, Globin spans 1 to 141 (VLSEGNKKII…VTYQLSSLYR (141 aa)). His-59 is an O2 binding site. His-88 is a heme b binding site.

This sequence belongs to the globin family. In terms of assembly, heterotetramer of two alpha chains and two beta chains. In terms of tissue distribution, red blood cells.

Involved in oxygen transport from the lung to the various peripheral tissues. This is Hemoglobin subunit alpha-2 from Torpedo marmorata (Marbled electric ray).